A 127-amino-acid polypeptide reads, in one-letter code: Large ribosomal subunit protein bL17 (127 aa).

Belongs to the bacterial ribosomal protein bL17 family. Part of the 50S ribosomal subunit. Contacts protein L32.

In Legionella pneumophila (strain Corby), this protein is Large ribosomal subunit protein bL17.